We begin with the raw amino-acid sequence, 965 residues long: Sarcosine oxidase subunit alpha (965 aa).

Residues Ala-139, Asp-158, Glu-159, Arg-160, Thr-166, Val-205, Ala-418, Leu-423, and Thr-425 each coordinate NAD(+). (6R)-5,10-methylene-5,6,7,8-tetrahydrofolate-binding residues include Thr-692 and Glu-784.

It belongs to the GcvT family. In terms of assembly, heterotetramer composed of subunits alpha (SoxA), beta (SoxB), gamma (SoxG) and delta (SoxD). The cofactor is NAD(+).

The protein resides in the cytoplasm. The catalysed reaction is sarcosine + (6S)-5,6,7,8-tetrahydrofolate + O2 = (6R)-5,10-methylene-5,6,7,8-tetrahydrofolate + glycine + H2O2. It carries out the reaction sarcosine + O2 + H2O = formaldehyde + glycine + H2O2. Inhibited by Zn(2+), Cu(2+), Cd(2+), Hg(2+), Ag(+), p-chloromercuribenzoate (p-CMB), iodoacetamide, N-ethylmaleimide, CN(-), o-phenanthroline and sodium lauryl sulfate. Its function is as follows. In the presence of tetrahydrofolate, catalyzes the oxidative demethylation of sarcosine to yield glycine, 5,10-methylenetetrahydrofolate and hydrogen peroxide. In the absence of tetrahydrofolate, catalyzes the oxidative demethylation of sarcosine to yield glycine, formaldehyde and hydrogen peroxide. Can also use N-methyl-L-alanine and N-ethyl-L-glycine. Is very specific for oxygen as an acceptor. The protein is Sarcosine oxidase subunit alpha of Corynebacterium sp. (strain U-96).